A 444-amino-acid chain; its full sequence is Aspartate--tRNA(Asp/Asn) ligase (444 aa).

Glu176 is a binding site for L-aspartate. The aspartate stretch occupies residues 198 to 201 (QLFK). Arg220 lines the L-aspartate pocket. Residues 220-222 (RAE), 228-230 (RHL), and Glu367 each bind ATP. Mg(2+) is bound by residues Glu367 and Ser370. Positions 370 and 374 each coordinate L-aspartate. 415-418 (GCER) is an ATP binding site.

The protein belongs to the class-II aminoacyl-tRNA synthetase family. Type 2 subfamily. Homodimer. Mg(2+) is required as a cofactor.

It is found in the cytoplasm. The enzyme catalyses tRNA(Asx) + L-aspartate + ATP = L-aspartyl-tRNA(Asx) + AMP + diphosphate. In terms of biological role, aspartyl-tRNA synthetase with relaxed tRNA specificity since it is able to aspartylate not only its cognate tRNA(Asp) but also tRNA(Asn). Reaction proceeds in two steps: L-aspartate is first activated by ATP to form Asp-AMP and then transferred to the acceptor end of tRNA(Asp/Asn). The chain is Aspartate--tRNA(Asp/Asn) ligase from Methanosarcina barkeri (strain Fusaro / DSM 804).